The sequence spans 420 residues: Probable ABC transporter-binding protein DR_1438 (420 aa).

Positions 1 to 24 are cleaved as a signal peptide; that stretch reads MKKFAAVLGLTVAFAAASQAHAVT.

Belongs to the bacterial solute-binding protein 1 family.

Probably part of a binding-protein-dependent transport system. This chain is Probable ABC transporter-binding protein DR_1438, found in Deinococcus radiodurans (strain ATCC 13939 / DSM 20539 / JCM 16871 / CCUG 27074 / LMG 4051 / NBRC 15346 / NCIMB 9279 / VKM B-1422 / R1).